A 275-amino-acid polypeptide reads, in one-letter code: Exosome complex component Rrp42 (275 aa).

It belongs to the RNase PH family. Rrp42 subfamily. As to quaternary structure, component of the archaeal exosome complex. Forms a hexameric ring-like arrangement composed of 3 Rrp41-Rrp42 heterodimers. The hexameric ring associates with a trimer of Rrp4 and/or Csl4 subunits.

Its subcellular location is the cytoplasm. Functionally, non-catalytic component of the exosome, which is a complex involved in RNA degradation. Contributes to the structuring of the Rrp41 active site. The protein is Exosome complex component Rrp42 of Saccharolobus islandicus (strain L.S.2.15 / Lassen #1) (Sulfolobus islandicus).